Here is a 654-residue protein sequence, read N- to C-terminus: Translation factor GUF1, mitochondrial (654 aa).

The tr-type G domain maps to 57–237 (ENYRNFSIVA…SVIKNIPSPV (181 aa)). GTP is bound by residues 66-73 (AHVDHGKS), 130-134 (DTPGH), and 184-187 (NKID).

Belongs to the TRAFAC class translation factor GTPase superfamily. Classic translation factor GTPase family. LepA subfamily.

It localises to the mitochondrion inner membrane. It carries out the reaction GTP + H2O = GDP + phosphate + H(+). Functionally, promotes mitochondrial protein synthesis. May act as a fidelity factor of the translation reaction, by catalyzing a one-codon backward translocation of tRNAs on improperly translocated ribosomes. Binds to mitochondrial ribosomes in a GTP-dependent manner. In Candida albicans (strain SC5314 / ATCC MYA-2876) (Yeast), this protein is Translation factor GUF1, mitochondrial.